We begin with the raw amino-acid sequence, 429 residues long: Adenylosuccinate synthetase (429 aa).

GTP contacts are provided by residues 12–18 (GDEGKGK) and 40–42 (GHT). Catalysis depends on Asp-13, which acts as the Proton acceptor. The Mg(2+) site is built by Asp-13 and Gly-40. Residues 13-16 (DEGK), 38-41 (NAGH), Thr-129, Arg-143, Gln-223, Thr-238, and Arg-302 contribute to the IMP site. The active-site Proton donor is the His-41. A substrate-binding site is contributed by 298–304 (TVTGRKR). Residues Arg-304, 330-332 (KLD), and 412-414 (STS) each bind GTP.

The protein belongs to the adenylosuccinate synthetase family. Homodimer. Requires Mg(2+) as cofactor.

It localises to the cytoplasm. It carries out the reaction IMP + L-aspartate + GTP = N(6)-(1,2-dicarboxyethyl)-AMP + GDP + phosphate + 2 H(+). It participates in purine metabolism; AMP biosynthesis via de novo pathway; AMP from IMP: step 1/2. Plays an important role in the de novo pathway of purine nucleotide biosynthesis. Catalyzes the first committed step in the biosynthesis of AMP from IMP. This Novosphingobium aromaticivorans (strain ATCC 700278 / DSM 12444 / CCUG 56034 / CIP 105152 / NBRC 16084 / F199) protein is Adenylosuccinate synthetase.